A 90-amino-acid chain; its full sequence is Probable Fe(2+)-trafficking protein (90 aa).

The protein belongs to the Fe(2+)-trafficking protein family.

Its function is as follows. Could be a mediator in iron transactions between iron acquisition and iron-requiring processes, such as synthesis and/or repair of Fe-S clusters in biosynthetic enzymes. This Herminiimonas arsenicoxydans protein is Probable Fe(2+)-trafficking protein.